The chain runs to 66 residues: Large ribosomal subunit protein uL29 (66 aa).

The protein belongs to the universal ribosomal protein uL29 family.

In Borrelia recurrentis (strain A1), this protein is Large ribosomal subunit protein uL29.